The sequence spans 74 residues: MKLTCVLIVAVLFLTACQLIAADDSRDLQKFPRRKMRDGMLNTKNTKRQCLPPLHWCNMVDDECCHFCVLLACV.

Positions 1–22 (MKLTCVLIVAVLFLTACQLIAA) are cleaved as a signal peptide. A propeptide spanning residues 23–46 (DDSRDLQKFPRRKMRDGMLNTKNT) is cleaved from the precursor. Glutamine 49 carries the post-translational modification Pyrrolidone carboxylic acid. 3 cysteine pairs are disulfide-bonded: cysteine 50–cysteine 65, cysteine 57–cysteine 68, and cysteine 64–cysteine 73.

This sequence belongs to the conotoxin O1 superfamily. In terms of tissue distribution, expressed by the venom duct.

The protein localises to the secreted. The polypeptide is Conotoxin ArMKLT2-041 (Conus arenatus (Sand-dusted cone)).